The following is a 333-amino-acid chain: uncharacterized protein (333 aa).

To bacterial alkanal monooxygenase alpha and beta chains.

This is an uncharacterized protein from Bacillus subtilis (strain 168).